Here is a 149-residue protein sequence, read N- to C-terminus: Large ribosomal subunit protein bL9 (149 aa).

The protein belongs to the bacterial ribosomal protein bL9 family.

In terms of biological role, binds to the 23S rRNA. This Helicobacter pylori (strain G27) protein is Large ribosomal subunit protein bL9.